The primary structure comprises 369 residues: Aspartate beta-hydroxylase domain-containing protein 2 (369 aa).

At 1–58 (MVWAPLGPPRTDCLTLLHTPSKDSPKMSLEWLVAWSWSLDGLRDCIATGIQSVRDCDT) the chain is on the cytoplasmic side. A helical transmembrane segment spans residues 59 to 79 (TAVITVACLLVLFVWYCYHVG). The Lumenal portion of the chain corresponds to 80 to 369 (REQPRPYVSV…ALDFIFAPGR (290 aa)). The N-linked (GlcNAc...) asparagine glycan is linked to Asn-211. The 2-oxoglutarate site is built by Trp-228 and Ser-272. His-283 contributes to the Fe cation binding site. 292-294 (RCH) contributes to the 2-oxoglutarate binding site. Fe cation is bound at residue His-328. Position 341 (Arg-341) interacts with 2-oxoglutarate.

The protein belongs to the aspartyl/asparaginyl beta-hydroxylase family. Requires Fe cation as cofactor.

The protein resides in the membrane. Its function is as follows. May function as 2-oxoglutarate-dependent dioxygenase. The chain is Aspartate beta-hydroxylase domain-containing protein 2 (ASPHD2) from Homo sapiens (Human).